The primary structure comprises 487 residues: Cysteine--tRNA ligase (487 aa).

A Zn(2+)-binding site is contributed by cysteine 30. The short motif at 32–42 (PTVYGHAHLGH) is the 'HIGH' region element. The Zn(2+) site is built by cysteine 226, histidine 251, and glutamate 255. The 'KMSKS' region motif lies at 283-287 (KMGKS). An ATP-binding site is contributed by lysine 286.

Belongs to the class-I aminoacyl-tRNA synthetase family. Monomer. The cofactor is Zn(2+).

Its subcellular location is the cytoplasm. The catalysed reaction is tRNA(Cys) + L-cysteine + ATP = L-cysteinyl-tRNA(Cys) + AMP + diphosphate. This Chlorobaculum tepidum (strain ATCC 49652 / DSM 12025 / NBRC 103806 / TLS) (Chlorobium tepidum) protein is Cysteine--tRNA ligase (cysS).